Reading from the N-terminus, the 126-residue chain is uncharacterized protein (126 aa).

Basic residues-rich tracts occupy residues R21–R31 and R41–R83. The segment at R21–R83 is disordered.

This is an uncharacterized protein from Saccharomyces cerevisiae (strain ATCC 204508 / S288c) (Baker's yeast).